The following is a 647-amino-acid chain: DNA mismatch repair protein MutL (647 aa).

Residues 375 to 433 form a disordered region; that stretch reads KQEEPQAVKQPTQLWQPPKQEWQPPQSLVREEQSWQPSTKPIIEEPIQEEKSWDSNEEG. The segment covering 387-400 has biased composition (low complexity); sequence QLWQPPKQEWQPPQ.

Belongs to the DNA mismatch repair MutL/HexB family.

In terms of biological role, this protein is involved in the repair of mismatches in DNA. It is required for dam-dependent methyl-directed DNA mismatch repair. May act as a 'molecular matchmaker', a protein that promotes the formation of a stable complex between two or more DNA-binding proteins in an ATP-dependent manner without itself being part of a final effector complex. The protein is DNA mismatch repair protein MutL of Bacillus cereus (strain AH820).